Consider the following 482-residue polypeptide: Kynurenine 3-monooxygenase (482 aa).

Belongs to the aromatic-ring hydroxylase family. KMO subfamily. The cofactor is FAD.

The protein localises to the mitochondrion outer membrane. It carries out the reaction L-kynurenine + NADPH + O2 + H(+) = 3-hydroxy-L-kynurenine + NADP(+) + H2O. Its pathway is cofactor biosynthesis; NAD(+) biosynthesis; quinolinate from L-kynurenine: step 1/3. Its function is as follows. Catalyzes the hydroxylation of L-kynurenine (L-Kyn) to form 3-hydroxy-L-kynurenine (L-3OHKyn). Required for synthesis of quinolinic acid. The chain is Kynurenine 3-monooxygenase from Phaeosphaeria nodorum (strain SN15 / ATCC MYA-4574 / FGSC 10173) (Glume blotch fungus).